Reading from the N-terminus, the 134-residue chain is MMSVGMLSFENVFFIAFSAYLVVILLMTAVSVYYLLKTLRGGDFALPDSELFKKAGKVVGKSFKDRGLTLHDLLWALELRGAVKMDSQSSKYYSTRPLKVNPEHLESYISAFLIAMNIRSDVTVKNESLIISIN.

The helical transmembrane segment at 13–35 (FFIAFSAYLVVILLMTAVSVYYL) threads the bilayer.

It localises to the membrane. This is an uncharacterized protein from Archaeoglobus fulgidus (strain ATCC 49558 / DSM 4304 / JCM 9628 / NBRC 100126 / VC-16).